We begin with the raw amino-acid sequence, 382 residues long: Glucose-1-phosphate adenylyltransferase (382 aa).

Residues Tyr100, Gly165, 180–181 (EK), and Ser191 each bind alpha-D-glucose 1-phosphate.

The protein belongs to the bacterial/plant glucose-1-phosphate adenylyltransferase family. In terms of assembly, homotetramer.

The catalysed reaction is alpha-D-glucose 1-phosphate + ATP + H(+) = ADP-alpha-D-glucose + diphosphate. The protein operates within glycan biosynthesis; glycogen biosynthesis. Functionally, involved in the biosynthesis of ADP-glucose, a building block required for the elongation reactions to produce glycogen. Catalyzes the reaction between ATP and alpha-D-glucose 1-phosphate (G1P) to produce pyrophosphate and ADP-Glc. The protein is Glucose-1-phosphate adenylyltransferase of Clostridium novyi (strain NT).